The sequence spans 527 residues: Formate--tetrahydrofolate ligase (527 aa).

Thr-53–Thr-60 contributes to the ATP binding site.

Belongs to the formate--tetrahydrofolate ligase family.

It carries out the reaction (6S)-5,6,7,8-tetrahydrofolate + formate + ATP = (6R)-10-formyltetrahydrofolate + ADP + phosphate. Its pathway is one-carbon metabolism; tetrahydrofolate interconversion. This is Formate--tetrahydrofolate ligase from Acholeplasma laidlawii (strain PG-8A).